We begin with the raw amino-acid sequence, 614 residues long: Probable ATP-dependent RNA helicase DDX5 (614 aa).

Positions 1–15 (MSGYSSDRDRGRDRG) are enriched in basic and acidic residues. Positions 1-39 (MSGYSSDRDRGRDRGFGAPRFGGSRAGPLSGKKFGNPGE) are disordered. S24 is subject to Phosphoserine. K32 is modified (N6-acetyllysine; alternate). K32 is covalently cross-linked (Glycyl lysine isopeptide (Lys-Gly) (interchain with G-Cter in SUMO2); alternate). K33 and K40 each carry N6-acetyllysine. A Glycyl lysine isopeptide (Lys-Gly) (interchain with G-Cter in SUMO2) cross-link involves residue K45. K53 participates in a covalent cross-link: Glycyl lysine isopeptide (Lys-Gly) (interchain with G-Cter in SUMO2); alternate. K53 participates in a covalent cross-link: Glycyl lysine isopeptide (Lys-Gly) (interchain with G-Cter in SUMO); alternate. A Glycyl lysine isopeptide (Lys-Gly) (interchain with G-Cter in SUMO1); alternate cross-link involves residue K53. A Q motif motif is present at residues 94–122 (LNFYEANFPANVMDVIARQNFTEPTAIQA). ATP-binding positions include 114–116 (FTE), Q121, and 138–145 (AQTGSGKT). A Helicase ATP-binding domain is found at 125-300 (WPVALSGLDM…EDFLKDYIHI (176 aa)). An N6-acetyllysine modification is found at K236. Residues 248-251 (DEAD) carry the DEAD box motif. Y297 bears the Phosphotyrosine mark. The 148-residue stretch at 328–475 (KLIRLMEEIM…AINPKLLQLV (148 aa)) folds into the Helicase C-terminal domain. Residues K340, K343, K388, K391, K411, K437, K451, and K470 each participate in a glycyl lysine isopeptide (Lys-Gly) (interchain with G-Cter in SUMO2) cross-link. The disordered stretch occupies residues 477 to 504 (DRGSGRSRGRGGMKDDRRDRYSAGKRGG). Residues 477–614 (DRGSGRSRGR…GYPMPTGYSQ (138 aa)) are transactivation domain. S480 carries the post-translational modification Phosphoserine. A compositionally biased stretch (basic and acidic residues) spans 488 to 498 (GMKDDRRDRYS). Position 520 is a phosphoserine (S520). K523 participates in a covalent cross-link: Glycyl lysine isopeptide (Lys-Gly) (interchain with G-Cter in SUMO2).

This sequence belongs to the DEAD box helicase family. DDX5/DBP2 subfamily. Identified in the spliceosome C complex. Component of a ribonucleoprotein complex containing mRNAs and RNA-binding proteins including DDX5, HNRNPH2 and SRSF1 as well as splicing regulator ARVCF. Interacts with RBM4; the interaction occurs in an RNA-independent manner. Interacts with AGO1 and AGO2. Interacts with ESR1, AR, EP300, CREBBP, POLR2A, TP53, RUNX2 and HDAC1. Self-associates. Interacts with DDX17. Interacts with BRDT. The large PER complex involved in the repression of transcriptional termination is composed of at least PER2, CDK9, DDX5, DHX9, NCBP1 and POLR2A (active). Interacts with DHX36; this interaction occurs in a RNA-dependent manner. Interacts with NUPR1. Interacts with ERCC6. Interacts with DDX3X in the cytoplasm; this interaction may be more efficient when both proteins are unphosphorylated. Post-translationally, arg-502 is dimethylated, probably to asymmetric dimethylarginine. In terms of processing, sumoylated; sumoylation, promoted by PIAS1, promotes interaction with HDAC1 and transcriptional repression activity. Sumoylation also significantly increases stability, and reduces polyubiquitination. Polyubiquitinated, leading to proteasomal degradation. Post-translationally, weakly phosphorylated in the G1/S phase of the cell cycle and much more at G2/M, especially at Thr and Tyr residues.

It is found in the nucleus. Its subcellular location is the nucleolus. The protein localises to the nucleus speckle. The protein resides in the cytoplasm. The catalysed reaction is ATP + H2O = ADP + phosphate + H(+). Involved in the alternative regulation of pre-mRNA splicing; its RNA helicase activity is necessary for increasing tau exon 10 inclusion and occurs in a RBM4-dependent manner. Binds to the tau pre-mRNA in the stem-loop region downstream of exon 10. The rate of ATP hydrolysis is highly stimulated by single-stranded RNA. Involved in transcriptional regulation; the function is independent of the RNA helicase activity. Transcriptional coactivator for androgen receptor AR but probably not ESR1. Synergizes with DDX17 and SRA1 RNA to activate MYOD1 transcriptional activity and involved in skeletal muscle differentiation. Transcriptional coactivator for p53/TP53 and involved in p53/TP53 transcriptional response to DNA damage and p53/TP53-dependent apoptosis. Transcriptional coactivator for RUNX2 and involved in regulation of osteoblast differentiation. Acts as a transcriptional repressor in a promoter-specific manner; the function probably involves association with histone deacetylases, such as HDAC1. As component of a large PER complex is involved in the inhibition of 3' transcriptional termination of circadian target genes such as PER1 and NR1D1 and the control of the circadian rhythms. The polypeptide is Probable ATP-dependent RNA helicase DDX5 (DDX5) (Homo sapiens (Human)).